A 2376-amino-acid polypeptide reads, in one-letter code: Reducing polyketide synthase DEP5 (2376 aa).

The 431-residue stretch at 47–477 folds into the Ketosynthase family 3 (KS3) domain; that stretch reads LEPIAVVGMG…GTNAHTIIES (431 aa). Catalysis depends on for beta-ketoacyl synthase activity residues cysteine 221, histidine 358, and histidine 399. The segment at 593–906 is malonyl-CoA:ACP transacylase (MAT) domain; the sequence is VFTGQGAQWA…QYLPTLVRGF (314 aa). Serine 685 serves as the catalytic For malonyltransferase activity. The N-terminal hotdog fold stretch occupies residues 983–1121; the sequence is HDVLGQLTTG…GSIAIRTSAR (139 aa). The dehydratase (DH) domain stretch occupies residues 983 to 1158; that stretch reads HDVLGQLTTG…FNYGPTFQDM (176 aa). The region spanning 983–1286 is the PKS/mFAS DH domain; the sequence is HDVLGQLTTG…CIAYEAAIPQ (304 aa). The active-site Proton acceptor; for dehydratase activity is the histidine 1015. The C-terminal hotdog fold stretch occupies residues 1131 to 1286; it reads LPQRASGRLW…CIAYEAAIPQ (156 aa). Aspartate 1195 functions as the Proton donor; for dehydratase activity in the catalytic mechanism. Positions 1659-1964 are enoyl reductase (ER) domain; it reads GRIQAGKVVF…DSICDNKIVI (306 aa). Positions 1988 to 2163 are ketoreductase (KR) domain; it reads ATYLLVGCLG…KPACAVVLPM (176 aa). Positions 2289–2368 constitute a Carrier domain; sequence DLVRDHFIAK…KFSELVCGAQ (80 aa). The residue at position 2327 (serine 2327) is an O-(pantetheine 4'-phosphoryl)serine.

The protein operates within polyketide biosynthesis. Its function is as follows. Reducing polyketide synthase; part of the gene cluster that mediates the biosynthesis of depudecin, a highly oxidized eleven-carbon linear polyketide that acts as a histone deacetylase (HDAC) inhibitor and makes a small contribution to pathogenesis. The reducing polyketide synthase DEP5 is the central enzyme in depudecin biosynthesis by yielding the backbone polyketide chain. The monooxygenases DEP2 and DEP4, as well as the uncharacterized protein DEP1, then act as tailoring enzymes to modify the intermediate polyketide chain into depudecin. This chain is Reducing polyketide synthase DEP5, found in Alternaria brassicicola (Dark leaf spot agent).